Consider the following 326-residue polypeptide: Flap endonuclease 1 (326 aa).

Positions 1–100 (MGNAALRQLA…EEVQERRVAR (100 aa)) are N-domain. Mg(2+) is bound by residues D28, D82, E154, E156, D175, D177, and D225. An I-domain region spans residues 118 to 246 (AASRLEARTQ…TAISAINDHG (129 aa)). The interval 318 to 326 (VQTGLDEWI) is interaction with PCNA.

The protein belongs to the XPG/RAD2 endonuclease family. FEN1 subfamily. Interacts with PCNA. PCNA stimulates the nuclease activity without altering cleavage specificity. Requires Mg(2+) as cofactor.

In terms of biological role, structure-specific nuclease with 5'-flap endonuclease and 5'-3' exonuclease activities involved in DNA replication and repair. During DNA replication, cleaves the 5'-overhanging flap structure that is generated by displacement synthesis when DNA polymerase encounters the 5'-end of a downstream Okazaki fragment. Binds the unpaired 3'-DNA end and kinks the DNA to facilitate 5' cleavage specificity. Cleaves one nucleotide into the double-stranded DNA from the junction in flap DNA, leaving a nick for ligation. Also involved in the base excision repair (BER) pathway. Acts as a genome stabilization factor that prevents flaps from equilibrating into structures that lead to duplications and deletions. Also possesses 5'-3' exonuclease activity on nicked or gapped double-stranded DNA. The protein is Flap endonuclease 1 of Haloquadratum walsbyi (strain DSM 16790 / HBSQ001).